The following is a 458-amino-acid chain: MPMLMATRIDIIQKLNVYPRFQNHDKKKLITLSNLDRQCPLLMYSVFFYKNTTTRDFDSVFSNLKLGLEETMSVWYPAAGRLGLDGGGCKLNIRCNDGGAVMVEAVATGVKLSELGDLTQYNEFYENLVYKPSLDGDFSVMPLVVAQVTRFACGGYSIGIGTSHSLFDGISAYEFIHAWASNSHIHNKSNSKITNKKEDVVIKPVHDRRNLLVNRDAVRETNAAAICHLYQLIKQAMMTYQEQNRNLELPDSGFVIKTFELNGDAIESMKKKSLEGFMCSSFEFLAAHLWKARTRALGLRRDAMVCLQFAVDIRKRTETPLPEGFSGNAYVLASVASTARELLEELTLESIVNKIREAKKSIDQGYINSYMEALGGSNDGNLPPLKELTLISDWTKMPFHNVGFGNGGEPADYMAPLCPPVPQVAYFMKNPKDAKGVLVRIGLDPRDVNGFSNHFLDC.

Histidine 164 functions as the Proton acceptor in the catalytic mechanism.

The protein belongs to the plant acyltransferase family. Highly expressed in young tissues and vascular bundles. Mostly expressed in young leaves, primary roots, flowers (including petals and sepals), and siliques.

The protein localises to the endoplasmic reticulum. It localises to the nucleus. Its pathway is plant hormone biosynthesis; brassinosteroid biosynthesis. Functionally, brassinosteroids (BR) acyltransferase with acyl-CoA ligase activity toward brassinolide (BL), castasterone (CS), typhasterol (TY), 6-deoxotyphasterol (6-deoxoTY), and 6-deoxocastasterone (6-deoxoCS) and thus converts them to corresponding lauroyl esters. Regulates BR homeostasis and promotes BR-mediated cell growth regulation. Involved in vascular bundle development. This is Brassinosteroid-related acyltransferase 1 from Arabidopsis thaliana (Mouse-ear cress).